Here is a 101-residue protein sequence, read N- to C-terminus: NAD(P)H-quinone oxidoreductase subunit 4L (101 aa).

3 helical membrane passes run 3–23 (LQYF…GLVT), 30–50 (VLMS…AFSN), and 64–84 (IFVI…VLAI).

This sequence belongs to the complex I subunit 4L family. NDH-1 can be composed of about 15 different subunits; different subcomplexes with different compositions have been identified which probably have different functions.

The protein localises to the cellular thylakoid membrane. The catalysed reaction is a plastoquinone + NADH + (n+1) H(+)(in) = a plastoquinol + NAD(+) + n H(+)(out). The enzyme catalyses a plastoquinone + NADPH + (n+1) H(+)(in) = a plastoquinol + NADP(+) + n H(+)(out). NDH-1 shuttles electrons from an unknown electron donor, via FMN and iron-sulfur (Fe-S) centers, to quinones in the respiratory and/or the photosynthetic chain. The immediate electron acceptor for the enzyme in this species is believed to be plastoquinone. Couples the redox reaction to proton translocation, and thus conserves the redox energy in a proton gradient. Cyanobacterial NDH-1 also plays a role in inorganic carbon-concentration. The polypeptide is NAD(P)H-quinone oxidoreductase subunit 4L (Leptolyngbya boryana (Plectonema boryanum)).